A 316-amino-acid chain; its full sequence is Ribosomal RNA large subunit methyltransferase F (316 aa).

It belongs to the methyltransferase superfamily. METTL16/RlmF family.

It localises to the cytoplasm. It catalyses the reaction adenosine(1618) in 23S rRNA + S-adenosyl-L-methionine = N(6)-methyladenosine(1618) in 23S rRNA + S-adenosyl-L-homocysteine + H(+). Specifically methylates the adenine in position 1618 of 23S rRNA. The protein is Ribosomal RNA large subunit methyltransferase F of Pseudomonas entomophila (strain L48).